The following is a 434-amino-acid chain: MTVKTETAAGASTLTYSKMRGMVALLIAFMKQRRMGLNDFIQKIATNSSYACKPSEVQSILNISPPQEPELLNENSSPPPSPSQQINLGPSSNPHAKPSDFQFLKIIGKGSFGKVLLARHQADEKFYAVKVLQKKAILKKKEEKHIMSERNVLLKNVKHPFLVGLHFSFQTTSRLYFILDYINGGELFYHLQRERCFLEPRARFYAAEIASALGYLHSLNIVYRDLKPENILLDSQGHIVLTDFGLCKENIEPNGTTSTFCGTPEYLAPEVLHKQPYDRTVDWWCLGAVLYEMLYGLPPFYSRNTAEMYDNILNKPLQLKPNITNSARNLLEGLLQKDRTKRIGAKNDFMEIKNHIFFSPINWDDLINKKITPPFNPNVSGPSDLQHFDPEFTEEPVPNSIGQSPDSILITASIKEAAEAFMGFSYAPPMESYL.

The tract at residues 66–94 (PQEPELLNENSSPPPSPSQQINLGPSSNP) is disordered. Over residues 84 to 94 (QQINLGPSSNP) the composition is skewed to polar residues. The region spanning 101-358 (FQFLKIIGKG…FMEIKNHIFF (258 aa)) is the Protein kinase domain. Residues 107–115 (IGKGSFGKV) and K130 contribute to the ATP site. Residue D225 is the Proton acceptor of the active site. Residues 359 to 434 (SPINWDDLIN…SYAPPMESYL (76 aa)) enclose the AGC-kinase C-terminal domain.

The protein belongs to the protein kinase superfamily. AGC Ser/Thr protein kinase family.

The protein localises to the cytoplasm. Its subcellular location is the nucleus. It is found in the endoplasmic reticulum. The enzyme catalyses L-seryl-[protein] + ATP = O-phospho-L-seryl-[protein] + ADP + H(+). It catalyses the reaction L-threonyl-[protein] + ATP = O-phospho-L-threonyl-[protein] + ADP + H(+). Functionally, protein kinase that may play an important role in cellular stress response. Plays an important role in activating certain potassium, sodium, and chloride channels, suggesting an involvement in the regulation of processes such as cell survival, neuronal excitability, and renal sodium excretion. In Xenopus laevis (African clawed frog), this protein is Serine/threonine-protein kinase Sgk1-A (sgk1-a).